A 155-amino-acid chain; its full sequence is Large ribosomal subunit protein uL22 (155 aa).

Residues 109–155 form a disordered region; sequence HITVIVESRPPKKAGKQGASASAARARRAQASKAATKKATDSKEGSE. Basic and acidic residues predominate over residues 146-155; it reads KATDSKEGSE.

This sequence belongs to the universal ribosomal protein uL22 family. In terms of assembly, part of the 50S ribosomal subunit.

Functionally, this protein binds specifically to 23S rRNA; its binding is stimulated by other ribosomal proteins, e.g. L4, L17, and L20. It is important during the early stages of 50S assembly. It makes multiple contacts with different domains of the 23S rRNA in the assembled 50S subunit and ribosome. The globular domain of the protein is located near the polypeptide exit tunnel on the outside of the subunit, while an extended beta-hairpin is found that lines the wall of the exit tunnel in the center of the 70S ribosome. The sequence is that of Large ribosomal subunit protein uL22 from Mycolicibacterium vanbaalenii (strain DSM 7251 / JCM 13017 / BCRC 16820 / KCTC 9966 / NRRL B-24157 / PYR-1) (Mycobacterium vanbaalenii).